Reading from the N-terminus, the 214-residue chain is Heat shock protein 30 (214 aa).

The region spanning 66 to 183 (VPSSLTIQPV…AERVVPINCS (118 aa)) is the sHSP domain. Residues 193–214 (SKTEGSITDTQKKQENTISKED) are disordered. Residues 202-214 (TQKKQENTISKED) show a composition bias toward basic and acidic residues.

Belongs to the small heat shock protein (HSP20) family.

The chain is Heat shock protein 30 (hsp30) from Oncorhynchus tshawytscha (Chinook salmon).